Here is a 175-residue protein sequence, read N- to C-terminus: MTTIITVRKGGKVVMAGDGQVSLGQTVMKGNARKVRRIGKGEVVAGFAGATADAFTLLERLEKKLEQYPGQLMRAAVELAKDWRTDKYLRNLEAMMLVADKSTTLAITGNGDVLEPEHGTTAIGSGGNFAFAAARALMDTDKSAEEIARRALDIAADICVYTNHNIVVESLDVEG.

The active site involves Thr-2. Residues Ala-156, Cys-159, and Thr-162 each coordinate Na(+).

It belongs to the peptidase T1B family. HslV subfamily. As to quaternary structure, a double ring-shaped homohexamer of HslV is capped on each side by a ring-shaped HslU homohexamer. The assembly of the HslU/HslV complex is dependent on binding of ATP.

Its subcellular location is the cytoplasm. It carries out the reaction ATP-dependent cleavage of peptide bonds with broad specificity.. Its activity is regulated as follows. Allosterically activated by HslU binding. Its function is as follows. Protease subunit of a proteasome-like degradation complex believed to be a general protein degrading machinery. This Rhizobium etli (strain CIAT 652) protein is ATP-dependent protease subunit HslV.